A 389-amino-acid chain; its full sequence is NADH-quinone oxidoreductase subunit D (389 aa).

This sequence belongs to the complex I 49 kDa subunit family. In terms of assembly, NDH-1 is composed of 14 different subunits. Subunits NuoB, C, D, E, F, and G constitute the peripheral sector of the complex.

It is found in the cell inner membrane. It carries out the reaction a quinone + NADH + 5 H(+)(in) = a quinol + NAD(+) + 4 H(+)(out). Its function is as follows. NDH-1 shuttles electrons from NADH, via FMN and iron-sulfur (Fe-S) centers, to quinones in the respiratory chain. The immediate electron acceptor for the enzyme in this species is believed to be ubiquinone. Couples the redox reaction to proton translocation (for every two electrons transferred, four hydrogen ions are translocated across the cytoplasmic membrane), and thus conserves the redox energy in a proton gradient. This chain is NADH-quinone oxidoreductase subunit D, found in Rickettsia typhi (strain ATCC VR-144 / Wilmington).